Reading from the N-terminus, the 667-residue chain is Receptor for retinol uptake STRA6 (667 aa).

A compositionally biased stretch (polar residues) spans 1–13; that stretch reads MSSQPAGNQTSPG. Residues 1–20 are disordered; sequence MSSQPAGNQTSPGATEDYSY. Over 1-50 the chain is Extracellular; the sequence is MSSQPAGNQTSPGATEDYSYGSWYIDEPQGGEELQPEGEVPSCHTSIPPG. N-linked (GlcNAc...) asparagine glycosylation is present at N8. Residues 51 to 71 traverse the membrane as a helical segment; it reads LYHACLASLSILVLLLLAMLV. Residues 72-100 are Cytoplasmic-facing; it reads RRRQLWPDCVRGRPGLPSPVDFLAGDRPR. The chain crosses the membrane as a helical span at residues 101-121; the sequence is AVPAAVFMVLLSSLCLLLPDE. Residues 122–144 are Extracellular-facing; the sequence is DALPFLTLASAPSQDGKTEAPRG. The chain crosses the membrane as a helical span at residues 145–165; that stretch reads AWKILGLFYYAALYYPLAACA. At 166–168 the chain is on the cytoplasmic side; that stretch reads TAG. A helical transmembrane segment spans residues 169–189; that stretch reads HTAAHLLGSTLSWAHLGVQVW. Residues 190 to 205 are Extracellular-facing; that stretch reads QRAECPQVPKIYKYYS. A helical membrane pass occupies residues 206-226; that stretch reads LLASLPLLLGLGFLSLWYPVQ. At 227–295 the chain is on the cytoplasmic side; the sequence is LVRSFSRRTG…PQPGFHLPLK (69 aa). The tract at residues 235–293 is interaction with RBP1; that stretch reads TGAGSKGLQSSYSEEYLRNLLCRKKLGSSYHTSKHGFLSWARVCLRHCIYTPQPGFHLP. A helical membrane pass occupies residues 296 to 316; that stretch reads LVLSATLTGTAIYQVALLLLV. At 317–367 the chain is on the extracellular side; sequence GVVPTIQKVRAGVTTDVSYLLAGFGIVLSEDKQEVVELVKHHLWALEVCYI. A helical membrane pass occupies residues 368–388; sequence SALVLSCLLTFLVLMRSLVTH. Over 389–422 the chain is Cytoplasmic; that stretch reads RTNLRALHRGAALDLSPLHRSPHPSRQAIFCWMS. The chain crosses the membrane as a helical span at residues 423-443; that stretch reads FSAYQTAFICLGLLVQQIIFF. At 444 to 473 the chain is on the extracellular side; that stretch reads LGTTALAFLVLMPVLHGRNLLLFRSLESSW. A helical transmembrane segment spans residues 474-494; that stretch reads PFWLTLALAVILQNMAAHWVF. Topologically, residues 495-509 are cytoplasmic; that stretch reads LETHDGHPQLTNRRV. Residues 510 to 547 constitute an intramembrane region (helical); sequence LYAATFLLFPLNVLVGAMVATWRVLLSALYNAIHLGQM. Residues 548–667 lie on the Cytoplasmic side of the membrane; it reads DLSLLPPRAA…ALLGANGAQP (120 aa). The residue at position 643 (Y643) is a Phosphotyrosine.

In terms of assembly, homodimer. Interacts with JAK2 and STAT5. Interacts (via extracellular domains) with RBP4. Interacts (via cytoplasmic domains) with RBP1. In terms of processing, phosphorylated on tyrosine residues in response to RBP4 binding. Phosphorylation requires the presence of LRAT, suggesting it may be triggered by the uptake of retinol that is then metabolized within the cell to retinoids that function as signaling molecules. As to expression, broad expression. In adult eye expressed in sclera, retina, retinal pigment epithelium, and trabecular meshwork but not in choroid and iris.

Its subcellular location is the cell membrane. Its function is as follows. Functions as a retinol transporter. Accepts all-trans retinol from the extracellular retinol-binding protein RBP4, facilitates retinol transport across the cell membrane, and then transfers retinol to the cytoplasmic retinol-binding protein RBP1. Retinol uptake is enhanced by LRAT, an enzyme that converts retinol to all-trans retinyl esters, the storage forms of vitamin A. Contributes to the activation of a signaling cascade that depends on retinol transport and LRAT-dependent generation of retinol metabolites that then trigger activation of JAK2 and its target STAT5, and ultimately increase the expression of SOCS3 and inhibit cellular responses to insulin. Important for the homeostasis of vitamin A and its derivatives, such as retinoic acid. STRA6-mediated transport is particularly important in the eye, and under conditions of dietary vitamin A deficiency. Does not transport retinoic acid. The sequence is that of Receptor for retinol uptake STRA6 (STRA6) from Homo sapiens (Human).